Here is a 339-residue protein sequence, read N- to C-terminus: DNA-directed RNA polymerase subunit alpha (339 aa).

The interval 1–234 (MIEKNWQELI…DQFQIFINFE (234 aa)) is alpha N-terminal domain (alpha-NTD). The tract at residues 251 to 339 (FNPALLRKVD…DLAKRFEDHV (89 aa)) is alpha C-terminal domain (alpha-CTD).

Belongs to the RNA polymerase alpha chain family. As to quaternary structure, homodimer. The RNAP catalytic core consists of 2 alpha, 1 beta, 1 beta' and 1 omega subunit. When a sigma factor is associated with the core the holoenzyme is formed, which can initiate transcription.

It catalyses the reaction RNA(n) + a ribonucleoside 5'-triphosphate = RNA(n+1) + diphosphate. DNA-dependent RNA polymerase catalyzes the transcription of DNA into RNA using the four ribonucleoside triphosphates as substrates. This Maricaulis maris (strain MCS10) (Caulobacter maris) protein is DNA-directed RNA polymerase subunit alpha.